Consider the following 36-residue polypeptide: Endoglucanase Cel12A (36 aa).

It belongs to the glycosyl hydrolase 12 (cellulase H) family.

It localises to the secreted. The protein resides in the extracellular space. It carries out the reaction Endohydrolysis of (1-&gt;4)-beta-D-glucosidic linkages in cellulose, lichenin and cereal beta-D-glucans.. In terms of biological role, has carboxymethylcellulase activity. In Gloeophyllum trabeum (Brown rot fungus), this protein is Endoglucanase Cel12A.